Reading from the N-terminus, the 350-residue chain is Bifunctional methylenetetrahydrofolate dehydrogenase/cyclohydrolase, mitochondrial (350 aa).

The transit peptide at 1-35 directs the protein to the mitochondrion; sequence MAAASFITSLVTRLLRSAQSGRLHQRPFHLSAVRN. K50 is subject to N6-acetyllysine; alternate. K50 participates in a covalent cross-link: Glycyl lysine isopeptide (Lys-Gly) (interchain with G-Cter in SUMO2); alternate. Substrate is bound by residues 84–88 and 131–133; these read YVLNK and VQL. Residues 200-202 and R233 each bind NAD(+); that span reads GRS. 309–313 provides a ligand contact to substrate; that stretch reads PGGVG.

Belongs to the tetrahydrofolate dehydrogenase/cyclohydrolase family. As to quaternary structure, homodimer. Requires Mg(2+) as cofactor.

It localises to the mitochondrion. It catalyses the reaction (6R)-5,10-methylene-5,6,7,8-tetrahydrofolate + NAD(+) = (6R)-5,10-methenyltetrahydrofolate + NADH. The catalysed reaction is (6R)-5,10-methenyltetrahydrofolate + H2O = (6R)-10-formyltetrahydrofolate + H(+). Functionally, although its dehydrogenase activity is NAD-specific, it can also utilize NADP at a reduced efficiency. The protein is Bifunctional methylenetetrahydrofolate dehydrogenase/cyclohydrolase, mitochondrial (MTHFD2) of Bos taurus (Bovine).